Consider the following 226-residue polypeptide: Ribonuclease 3 (226 aa).

One can recognise an RNase III domain in the interval 6 to 128; that stretch reads INRLQRKLGY…LIGGVFLDSN (123 aa). Residue Glu-41 participates in Mg(2+) binding. Asp-45 is a catalytic residue. Positions 114 and 117 each coordinate Mg(2+). The active site involves Glu-117. In terms of domain architecture, DRBM spans 155 to 225; the sequence is DPKTRLQEYL…AEQALKKLEL (71 aa).

It belongs to the ribonuclease III family. As to quaternary structure, homodimer. Mg(2+) is required as a cofactor.

The protein localises to the cytoplasm. The catalysed reaction is Endonucleolytic cleavage to 5'-phosphomonoester.. Functionally, digests double-stranded RNA. Involved in the processing of primary rRNA transcript to yield the immediate precursors to the large and small rRNAs (23S and 16S). Processes some mRNAs, and tRNAs when they are encoded in the rRNA operon. Processes pre-crRNA and tracrRNA of type II CRISPR loci if present in the organism. The chain is Ribonuclease 3 from Salmonella enteritidis PT4 (strain P125109).